The primary structure comprises 422 residues: Imidazolonepropionase (422 aa).

Positions 82 and 84 each coordinate Fe(3+). Positions 82 and 84 each coordinate Zn(2+). Residues R91, Y154, and H187 each contribute to the 4-imidazolone-5-propanoate site. Y154 contacts N-formimidoyl-L-glutamate. Residue H252 coordinates Fe(3+). H252 is a binding site for Zn(2+). E255 lines the 4-imidazolone-5-propanoate pocket. A Fe(3+)-binding site is contributed by D327. D327 is a Zn(2+) binding site. N-formimidoyl-L-glutamate contacts are provided by N329 and G331. S332 contacts 4-imidazolone-5-propanoate.

It belongs to the metallo-dependent hydrolases superfamily. HutI family. It depends on Zn(2+) as a cofactor. Fe(3+) is required as a cofactor.

Its subcellular location is the cytoplasm. The enzyme catalyses 4-imidazolone-5-propanoate + H2O = N-formimidoyl-L-glutamate. It participates in amino-acid degradation; L-histidine degradation into L-glutamate; N-formimidoyl-L-glutamate from L-histidine: step 3/3. Catalyzes the hydrolytic cleavage of the carbon-nitrogen bond in imidazolone-5-propanoate to yield N-formimidoyl-L-glutamate. It is the third step in the universal histidine degradation pathway. In Alkaliphilus oremlandii (strain OhILAs) (Clostridium oremlandii (strain OhILAs)), this protein is Imidazolonepropionase.